Consider the following 509-residue polypeptide: Maturase K (509 aa).

It belongs to the intron maturase 2 family. MatK subfamily.

The protein localises to the plastid. The protein resides in the chloroplast. Its function is as follows. Usually encoded in the trnK tRNA gene intron. Probably assists in splicing its own and other chloroplast group II introns. This is Maturase K from Sequoia sempervirens (California redwood).